The sequence spans 123 residues: MPTINQLVRHGRKRSVKKTNTPALKASPQKRGVCTRVYTTTPKKPNSALRKVARVRLTTGMEVTAYIPGVGHNLQEHSVVLVRGGRVKDLPGVRYHIVRGTLDSIGVQDRKQGRSHYGAKKPK.

The tract at residues 1–32 (MPTINQLVRHGRKRSVKKTNTPALKASPQKRG) is disordered. 3-methylthioaspartic acid is present on aspartate 89.

This sequence belongs to the universal ribosomal protein uS12 family. In terms of assembly, part of the 30S ribosomal subunit. Contacts proteins S8 and S17. May interact with IF1 in the 30S initiation complex.

In terms of biological role, with S4 and S5 plays an important role in translational accuracy. Its function is as follows. Interacts with and stabilizes bases of the 16S rRNA that are involved in tRNA selection in the A site and with the mRNA backbone. Located at the interface of the 30S and 50S subunits, it traverses the body of the 30S subunit contacting proteins on the other side and probably holding the rRNA structure together. The combined cluster of proteins S8, S12 and S17 appears to hold together the shoulder and platform of the 30S subunit. This chain is Small ribosomal subunit protein uS12, found in Desulfatibacillum aliphaticivorans.